The chain runs to 97 residues: UPF0235 protein Aasi_0294 (97 aa).

It belongs to the UPF0235 family.

In Amoebophilus asiaticus (strain 5a2), this protein is UPF0235 protein Aasi_0294.